Reading from the N-terminus, the 513-residue chain is Zinc finger CCCH-type with G patch domain-containing protein (513 aa).

Met1 carries the N-acetylmethionine modification. The interval 90 to 131 is disordered; the sequence is EVPVAPGAELETVPSRETGPGPTERGQEEDDGEDEEGGAALS. Positions 116–126 are enriched in acidic residues; sequence QEEDDGEDEEG. The C3H1-type zinc-finger motif lies at 176–202; it reads KSLKPCSFFLEGKCRFQENCRFSHGQV. The interval 267-296 is disordered; that stretch reads LPPLRTEPAGSSDSDGSDADDPSYARVVEP. Phosphoserine is present on residues Ser278 and Ser355. Positions 315–361 constitute a G-patch domain; it reads TRGIGSRLLAKMGYEFGKGLGRHAEGRVEPVHAVVLPRGKSLDQCAE. Disordered regions lie at residues 367 to 394 and 492 to 513; these read TRAGQAGVSKPPKCRSRGSGPGGRPPPR and AQEAGLQREQRKADTHKKMTEF. Positions 497–513 are enriched in basic and acidic residues; that stretch reads LQREQRKADTHKKMTEF.

In terms of assembly, interacts with CHD4/Mi-2; the interaction is direct.

Its subcellular location is the nucleus. Transcription repressor that specifically binds the 5'-GGAG[GA]A[GA]A-3' consensus sequence. Represses transcription by recruiting the chromatin multiprotein complex NuRD to target promoters. Negatively regulates expression of EGFR, a gene involved in cell proliferation, survival and migration. Its ability to repress genes of the EGFR pathway suggest it may act as a tumor suppressor. The sequence is that of Zinc finger CCCH-type with G patch domain-containing protein (ZGPAT) from Bos taurus (Bovine).